The following is a 276-amino-acid chain: Cruxhalorhodopsin-3 (276 aa).

The propeptide occupies 1–21; it reads MPAASTAATTLLQASQSEVLG. Over 22-25 the chain is Extracellular; sequence EIQS. A helical membrane pass occupies residues 26–51; sequence NFLLNSSLWVNIALAGVVILLFVAMG. The Cytoplasmic portion of the chain corresponds to 52–57; it reads RELESS. The chain crosses the membrane as a helical span at residues 58-81; sequence RAKLIWVATMLVPLVSISSYAGLA. The Extracellular segment spans residues 82 to 105; it reads SGLTVGFLQMPPGHALAGQEVLSP. Residues 106–127 form a helical membrane-spanning segment; it reads WGRYLTWTFSTPMILLALGLLA. Topologically, residues 128–130 are cytoplasmic; sequence DTD. The chain crosses the membrane as a helical span at residues 131 to 154; it reads MASLFTAITMDIGMCITGLAAALV. Residues 155-157 lie on the Extracellular side of the membrane; that stretch reads TSS. A helical membrane pass occupies residues 158-180; sequence HLLRWVFYGISCAFFIAVLYVLL. At 181–192 the chain is on the cytoplasmic side; it reads VEWPADAEAAGT. The chain crosses the membrane as a helical span at residues 193 to 216; it reads SEIFGTLKLLTVVLWLGYPILWAL. The Extracellular segment spans residues 217–225; sequence GSEGVALLS. Residues 226–254 traverse the membrane as a helical segment; it reads VGVTSWGYSGLDILAKYVFAFLLLRWVAA. K241 is subject to N6-(retinylidene)lysine. The Cytoplasmic segment spans residues 255–276; it reads NEDTVTQAGMSLGSGGAAPADD.

Belongs to the archaeal/bacterial/fungal opsin family.

It localises to the cell membrane. Light-driven chloride pump. The sequence is that of Cruxhalorhodopsin-3 (choP3) from Haloarcula vallismortis (Halobacterium vallismortis).